Here is a 322-residue protein sequence, read N- to C-terminus: Phospho-N-acetylmuramoyl-pentapeptide-transferase (322 aa).

10 helical membrane-spanning segments follow: residues 6–26 (ASCIALVSSLTLTVIFLPLLI), 54–74 (TMGGTIFVIAAVISVIWVTAW), 82–102 (VWILVISLLGYGIIGFLDDGI), 122–142 (IIIAVVIVLIASSDHFNFGLY), 145–165 (FAGVVHSVALFVIFIIFWLVG), 176–196 (LDGLATGLSVVAYGTYAYIAF), 200–220 (NFAILAFCMSVIGGLIAFFIF), 227–247 (IFMGDAGSLALGGGLATVSIM), 255–275 (LLVGIVFVCETASVIMQVISF), and 302–322 (VDIVFWIVGLVGSILYLAIWG).

The protein belongs to the glycosyltransferase 4 family. MraY subfamily. It depends on Mg(2+) as a cofactor.

The protein resides in the cell membrane. It catalyses the reaction UDP-N-acetyl-alpha-D-muramoyl-L-alanyl-gamma-D-glutamyl-L-lysyl-D-alanyl-D-alanine + di-trans,octa-cis-undecaprenyl phosphate = Mur2Ac(oyl-L-Ala-gamma-D-Glu-L-Lys-D-Ala-D-Ala)-di-trans,octa-cis-undecaprenyl diphosphate + UMP. Its pathway is cell wall biogenesis; peptidoglycan biosynthesis. In terms of biological role, catalyzes the initial step of the lipid cycle reactions in the biosynthesis of the cell wall peptidoglycan: transfers peptidoglycan precursor phospho-MurNAc-pentapeptide from UDP-MurNAc-pentapeptide onto the lipid carrier undecaprenyl phosphate, yielding undecaprenyl-pyrophosphoryl-MurNAc-pentapeptide, known as lipid I. The polypeptide is Phospho-N-acetylmuramoyl-pentapeptide-transferase (Lactobacillus helveticus (strain DPC 4571)).